The chain runs to 360 residues: MPLKGEISAQAGREFDTSRLDLRAIIDPRDLRVDPTRLFLETTQQTRLAICISDPHQPDCPVVYVNQAFLDLTGYAREEIVGRNCRFLQGADTDPEQVRKLREGIAAERYTVVDLLNYRKDGIPFWNAVHVGPIYGEDGTLQYFYGSQWDITDIVAERRKAETQRRIAAELRHRTGNIFAVLNAIIGLTSRRERDVSEFADKLSERVSALASAHRMTIMDEPDQEAVAIDDLVTGVMKPYRNRFAERVTTSGPKIELGPRSVTALGLALHELATNAVKYGALSVDAGRVEISWSREDGDVTLVWQEQGGPTVSQEQSEPVKGNGTMLIDGMIASLTGSIERDFAAAGLQAKITLPVHQPE.

A PAS domain is found at 38–109 (LFLETTQQTR…KLREGIAAER (72 aa)). C85 carries the S-4a-FMN cysteine modification. The 55-residue stretch at 109-163 (RYTVVDLLNYRKDGIPFWNAVHVGPIYGEDGTLQYFYGSQWDITDIVAERRKAET) folds into the PAC domain. Residue H173 is modified to Phosphohistidine; by autocatalysis. Residues 260 to 303 (RSVTALGLALHELATNAVKYGALSVDAGRVEISWSREDGDVTLV) form an HWE histidine kinase domain region.

Post-translationally, FMN binds covalently to cysteine after exposure to blue light and this bond is spontaneously broken in the dark.

The enzyme catalyses ATP + protein L-histidine = ADP + protein N-phospho-L-histidine.. Photosensitive kinase that is involved in increased bacterial virulence upon exposure to light. The chain is Blue-light-activated histidine kinase 1 from Erythrobacter litoralis (strain HTCC2594).